Reading from the N-terminus, the 561-residue chain is Amidophosphoribosyltransferase 2, chloroplastic (561 aa).

Residues 1–27 (MAATSSISSSLSLNAKPNKLSNNNNNN) show a composition bias toward low complexity. The tract at residues 1–36 (MAATSSISSSLSLNAKPNKLSNNNNNNKPHRFLRNP) is disordered. A chloroplast-targeting transit peptide spans 1-53 (MAATSSISSSLSLNAKPNKLSNNNNNNKPHRFLRNPFLNPSSSSFSPLPASIS). Cys87 acts as the Nucleophile in catalysis. One can recognise a Glutamine amidotransferase type-2 domain in the interval 87–307 (CGVVGIYGDS…PGEVLVVDKD (221 aa)). 4 residues coordinate [4Fe-4S] cluster: Cys323, Cys469, Cys520, and Cys523.

This sequence in the C-terminal section; belongs to the purine/pyrimidine phosphoribosyltransferase family. [4Fe-4S] cluster serves as cofactor. Requires Mg(2+) as cofactor. In terms of tissue distribution, mostly expressed in leaves, and, to a lower extent, in cotyledons.

Its subcellular location is the plastid. The protein resides in the chloroplast stroma. It catalyses the reaction 5-phospho-beta-D-ribosylamine + L-glutamate + diphosphate = 5-phospho-alpha-D-ribose 1-diphosphate + L-glutamine + H2O. Its pathway is purine metabolism; IMP biosynthesis via de novo pathway; N(1)-(5-phospho-D-ribosyl)glycinamide from 5-phospho-alpha-D-ribose 1-diphosphate: step 1/2. Inhibited by the phenyltriazole acetic acid compound [5-(4-chlorophenyl)-1-isopropyl-1H-[1,2,4]triazol-3-yl]-acetic acid (DAS734), a bleaching herbicide. Functionally, catalyzes the first committed step of 'de novo purine biosynthesis from glutamine. Required for chloroplast biogenesis and cell division. Confers sensitivity to the phenyltriazole acetic acid compound [5-(4-chlorophenyl)-1-isopropyl-1H-[1,2,4]triazol-3-yl]-acetic acid (DAS734), a bleaching herbicide. In Arabidopsis thaliana (Mouse-ear cress), this protein is Amidophosphoribosyltransferase 2, chloroplastic (ASE2).